Here is a 468-residue protein sequence, read N- to C-terminus: 6-phospho-beta-galactosidase (468 aa).

The D-galactose 6-phosphate site is built by Gln19, His116, Asn159, Glu160, and Asn297. The active-site Proton donor is Glu160. Catalysis depends on Glu375, which acts as the Nucleophile. 4 residues coordinate D-galactose 6-phosphate: Ser428, Trp429, Lys435, and Tyr437.

The protein belongs to the glycosyl hydrolase 1 family.

The enzyme catalyses a 6-phospho-beta-D-galactoside + H2O = D-galactose 6-phosphate + an alcohol. Its pathway is carbohydrate metabolism; lactose degradation; D-galactose 6-phosphate and beta-D-glucose from lactose 6-phosphate: step 1/1. This Streptococcus pneumoniae (strain JJA) protein is 6-phospho-beta-galactosidase.